The following is a 214-amino-acid chain: Thiamine-phosphate synthase (214 aa).

Residues 37–41 and N73 contribute to the 4-amino-2-methyl-5-(diphosphooxymethyl)pyrimidine site; that span reads QYREK. D74 and D93 together coordinate Mg(2+). S112 provides a ligand contact to 4-amino-2-methyl-5-(diphosphooxymethyl)pyrimidine. Position 139-141 (139-141) interacts with 2-[(2R,5Z)-2-carboxy-4-methylthiazol-5(2H)-ylidene]ethyl phosphate; that stretch reads TIS. A 4-amino-2-methyl-5-(diphosphooxymethyl)pyrimidine-binding site is contributed by K142. Residues G171 and 191–192 contribute to the 2-[(2R,5Z)-2-carboxy-4-methylthiazol-5(2H)-ylidene]ethyl phosphate site; that span reads IS.

Belongs to the thiamine-phosphate synthase family. It depends on Mg(2+) as a cofactor.

The catalysed reaction is 2-[(2R,5Z)-2-carboxy-4-methylthiazol-5(2H)-ylidene]ethyl phosphate + 4-amino-2-methyl-5-(diphosphooxymethyl)pyrimidine + 2 H(+) = thiamine phosphate + CO2 + diphosphate. The enzyme catalyses 2-(2-carboxy-4-methylthiazol-5-yl)ethyl phosphate + 4-amino-2-methyl-5-(diphosphooxymethyl)pyrimidine + 2 H(+) = thiamine phosphate + CO2 + diphosphate. It catalyses the reaction 4-methyl-5-(2-phosphooxyethyl)-thiazole + 4-amino-2-methyl-5-(diphosphooxymethyl)pyrimidine + H(+) = thiamine phosphate + diphosphate. It participates in cofactor biosynthesis; thiamine diphosphate biosynthesis; thiamine phosphate from 4-amino-2-methyl-5-diphosphomethylpyrimidine and 4-methyl-5-(2-phosphoethyl)-thiazole: step 1/1. In terms of biological role, condenses 4-methyl-5-(beta-hydroxyethyl)thiazole monophosphate (THZ-P) and 2-methyl-4-amino-5-hydroxymethyl pyrimidine pyrophosphate (HMP-PP) to form thiamine monophosphate (TMP). This chain is Thiamine-phosphate synthase, found in Listeria innocua serovar 6a (strain ATCC BAA-680 / CLIP 11262).